A 303-amino-acid chain; its full sequence is MAGRAILIAGPTASGKSALALGLAQARGGVVINADSMQVYGDLRVLTARPSPEEEEAAPHRLYGHVDGAVNYSVGHYLADAGRVLRDAWAAERLPIVVGGTGLYFKALLEGLSAIPPVPEAVRAAVRAQAEGRETASLHADLARLDPEGAARIAPGDRLRVLRALEIRAATGRPLSAFQGSRQPGPLAGVACEKLFLAPDRAGLRARIDARFLSMMEAGALDEVRRLRARHLDPMLPVMRAHGVPGLIAHLNGALTREEAVARGQADTRRYAKRQVTWFRHQVGEDWRWLTPEEAAREFLPGH.

Residue 10–17 participates in ATP binding; sequence GPTASGKS. A substrate-binding site is contributed by 12 to 17; the sequence is TASGKS. Positions 35-38 are interaction with substrate tRNA; it reads DSMQ.

Belongs to the IPP transferase family. In terms of assembly, monomer. Requires Mg(2+) as cofactor.

It carries out the reaction adenosine(37) in tRNA + dimethylallyl diphosphate = N(6)-dimethylallyladenosine(37) in tRNA + diphosphate. Catalyzes the transfer of a dimethylallyl group onto the adenine at position 37 in tRNAs that read codons beginning with uridine, leading to the formation of N6-(dimethylallyl)adenosine (i(6)A). The chain is tRNA dimethylallyltransferase from Methylobacterium nodulans (strain LMG 21967 / CNCM I-2342 / ORS 2060).